A 386-amino-acid polypeptide reads, in one-letter code: DNase toxin Tse7 (386 aa).

As to quaternary structure, interacts with Tsi7.

It carries out the reaction Endonucleolytic cleavage to 5'-phosphodinucleotide and 5'-phosphooligonucleotide end-products.. In terms of biological role, type VI secretion exported toxin that via to its DNase activity induces growth arrest and ultimately DNA degradation within target cell. The activity is initially neutralized by a cognate immunity protein Tsi7. This Pseudomonas aeruginosa (strain ATCC 15692 / DSM 22644 / CIP 104116 / JCM 14847 / LMG 12228 / 1C / PRS 101 / PAO1) protein is DNase toxin Tse7.